Here is a 334-residue protein sequence, read N- to C-terminus: Methionyl-tRNA formyltransferase (334 aa).

111–114 (SILP) serves as a coordination point for (6S)-5,6,7,8-tetrahydrofolate.

Belongs to the Fmt family.

It carries out the reaction L-methionyl-tRNA(fMet) + (6R)-10-formyltetrahydrofolate = N-formyl-L-methionyl-tRNA(fMet) + (6S)-5,6,7,8-tetrahydrofolate + H(+). In terms of biological role, attaches a formyl group to the free amino group of methionyl-tRNA(fMet). The formyl group appears to play a dual role in the initiator identity of N-formylmethionyl-tRNA by promoting its recognition by IF2 and preventing the misappropriation of this tRNA by the elongation apparatus. The sequence is that of Methionyl-tRNA formyltransferase from Gloeothece citriformis (strain PCC 7424) (Cyanothece sp. (strain PCC 7424)).